A 244-amino-acid polypeptide reads, in one-letter code: Rho-related GTP-binding protein RhoE (244 aa).

30 to 37 (GDSQCGRT) lines the GTP pocket. The short motif at 52 to 60 (YVPTVFENY) is the Effector region element. GTP contacts are provided by residues 77 to 81 (DTSGS) and 135 to 138 (CKSD). Cysteine 241 carries the cysteine methyl ester modification. Cysteine 241 carries the S-farnesyl cysteine lipid modification. The propeptide at 242–244 (TVM) is removed in mature form.

It belongs to the small GTPase superfamily. Rho family. In terms of assembly, binds ROCK1. Interacts with UBXD5.

Its subcellular location is the cell membrane. Binds GTP but lacks intrinsic GTPase activity and is resistant to Rho-specific GTPase-activating proteins. The chain is Rho-related GTP-binding protein RhoE (RND3) from Sus scrofa (Pig).